A 170-amino-acid chain; its full sequence is Cyclic pyranopterin monophosphate synthase (170 aa).

Substrate-binding positions include 75-77 (LCH) and 113-114 (ME). The active site involves Asp128.

The protein belongs to the MoaC family. As to quaternary structure, homohexamer; trimer of dimers.

The catalysed reaction is (8S)-3',8-cyclo-7,8-dihydroguanosine 5'-triphosphate = cyclic pyranopterin phosphate + diphosphate. It functions in the pathway cofactor biosynthesis; molybdopterin biosynthesis. Its function is as follows. Catalyzes the conversion of (8S)-3',8-cyclo-7,8-dihydroguanosine 5'-triphosphate to cyclic pyranopterin monophosphate (cPMP). In Pelotomaculum thermopropionicum (strain DSM 13744 / JCM 10971 / SI), this protein is Cyclic pyranopterin monophosphate synthase.